The chain runs to 311 residues: Putative mitochondrial transporter UCP3 (311 aa).

The Mitochondrial intermembrane portion of the chain corresponds to 1–10 (MVGLKPSEVP). The chain crosses the membrane as a helical span at residues 11–32 (PTTAVKFLGAGTAACFADLLTF). Solcar repeat units lie at residues 11-105 (PTTA…VKQF), 114-205 (SSIT…IKEK), and 214-299 (DNFP…LKRA). Over 33 to 76 (PLDTAKVRLQIQGENQATQAARRIQYRGVLGTILTMVRTEGPRS) the chain is Mitochondrial matrix. The helical transmembrane segment at 77-99 (PYNGLVAGLQRQMSFASIRIGLY) threads the bilayer. At 100 to 119 (DSVKQFYTPKGSDHSSITTR) the chain is on the mitochondrial intermembrane side. A helical transmembrane segment spans residues 120–136 (ILAGCTTGAMAVSCAQP). The Mitochondrial matrix portion of the chain corresponds to 137–182 (TDVVKVRFQASIHLGAGSNRKYSGTMDAYRTIAREEGVRGLWKGTL). Residues 183–199 (PNITRNAIVNCAEMVTY) form a helical membrane-spanning segment. Residues 200 to 216 (DIIKEKLLDYHLLTDNF) are Mitochondrial intermembrane-facing. The chain crosses the membrane as a helical span at residues 217 to 236 (PCHLISAFGAGFCATVVASP). At 237–270 (VDVVKTRYMNSPPGQYCSPLDCMLKMVTQEGPTA) the chain is on the mitochondrial matrix side. A helical membrane pass occupies residues 271 to 293 (FYKGFTPSFLRLGTWNVVMFVTY). A purine nucleotide binding region spans residues 278–300 (SFLRLGTWNVVMFVTYEQLKRAL). At 294-311 (EQLKRALMKVQMLRESPF) the chain is on the mitochondrial intermembrane side.

This sequence belongs to the mitochondrial carrier (TC 2.A.29) family. Interacts with HAX1; the interaction is direct and calcium-dependent.

The protein localises to the mitochondrion inner membrane. Its function is as follows. Putative transmembrane transporter that plays a role in mitochondrial metabolism via an as yet unclear mechanism. Originally, this mitochondrial protein was thought to act as a proton transmembrane transporter from the mitochondrial intermembrane space into the matrix, causing proton leaks through the inner mitochondrial membrane, thereby uncoupling mitochondrial membrane potential generation from ATP synthesis. However, this function is controversial and uncoupling may not be the function, or at least not the main function, but rather a consequence of more conventional metabolite transporter activity. The polypeptide is Putative mitochondrial transporter UCP3 (Canis lupus familiaris (Dog)).